Consider the following 86-residue polypeptide: Sugar transporter SemiSWEET (86 aa).

3 helical membrane passes run 3-23, 37-57, and 61-81; these read PFLI…AYAP, ISLG…IYGL, and DAPL…ILVM. A PQ-loop domain is found at 6-63; the sequence is IKLIGFAAATCTTVAYAPQFIKVLKTRSARDISLGMFLVMVLGLALWLIYGLLSGDAP.

As to quaternary structure, homodimer. Homooligomer.

It localises to the cell membrane. Functionally, mediates sucrose transmembrane transport down a concentration gradient. The protein is Sugar transporter SemiSWEET of Bradyrhizobium diazoefficiens (strain JCM 10833 / BCRC 13528 / IAM 13628 / NBRC 14792 / USDA 110).